The following is a 236-amino-acid chain: Protein INCA1 (236 aa).

A Phosphoserine modification is found at Ser23. Residues 75-99 form an interaction with CCNA1 and CCNA1/CDK2 complex; essential for CDK2 inhibitory activity region; that stretch reads GLYPPEQLPPPEMLWRRKKRRPCLE. A Nuclear localization signal motif is present at residues 90–95; the sequence is RRKKRR. Thr182 carries the post-translational modification Phosphothreonine. Phosphoserine occurs at positions 191 and 194.

It belongs to the INCA family. As to quaternary structure, interacts with CCNA1. Interacts with CCNA2, CCNB1 and CCNE1. Found in a complex with CCNA1 and CDK2. Interacts with ZNF16; the interaction inhibits INCA1 activity and induces the cell cycle process. Interacts with SPACA9. Interacts with the CCNA1/CDK2 complex. Interacts with ING5, DAZAP2, RNF26, USP15, SPOUT1, DPH7, TRIM26 and RAB5C. Post-translationally, phosphorylated when part of a complex with CCNA1 and CDK2. Strongly phosphorylated by CDK2 on its C-terminal region spanning amino acid 149-221. Less intensively phosphorylated by CDK2 on its first 75 amino acid residues. Detected in testis, and at lower levels in ovary. Detected at very low levels in testis tumors. Down-regulated in bone marrow cells in acute myeloid and lymphoid leukemia patients as compared with normal bone marrow cells.

The protein localises to the nucleus. The protein resides in the cytoplasm. Binds to CDK2-bound cyclins and inhibits the kinase activity of CDK2; binding to cyclins is critical for its function as CDK inhibitor. Inhibits cell growth and cell proliferation and may play a role in cell cycle control. Required for ING5-mediated regulation of S-phase progression, enhancement of Fas-induced apoptosis and inhibition of cell growth. This Homo sapiens (Human) protein is Protein INCA1 (INCA1).